The chain runs to 65 residues: Large ribosomal subunit protein uL29 (65 aa).

This sequence belongs to the universal ribosomal protein uL29 family.

This Desulforamulus reducens (strain ATCC BAA-1160 / DSM 100696 / MI-1) (Desulfotomaculum reducens) protein is Large ribosomal subunit protein uL29.